The chain runs to 119 residues: FAD-linked sulfhydryl oxidase (119 aa).

An ERV/ALR sulfhydryl oxidase domain is found at 1-97; sequence MLHWGPKYWR…ISWSEYKNIY (97 aa). Cysteines 44 and 47 form a disulfide.

Belongs to the asfivirus B119L family. In terms of assembly, interacts with A151R. FAD is required as a cofactor.

It localises to the host cytoplasm. It is found in the virion. The catalysed reaction is 2 R'C(R)SH + O2 = R'C(R)S-S(R)CR' + H2O2. In terms of biological role, FAD-dependent sulfhydryl oxidase that catalyzes the formation of disulfide bonds in viral proteins produced in the cell cytoplasm. Involved in virion maturation. The protein is FAD-linked sulfhydryl oxidase of African swine fever virus (isolate Warthog/Namibia/Wart80/1980) (ASFV).